We begin with the raw amino-acid sequence, 1098 residues long: WD repeat-containing protein 72 (1098 aa).

WD repeat units follow at residues 15 to 54 (APPHSITAIMITDDQRMIVTGSQEGQLCLWNLSHELKISA), 60 to 102 (GHSA…CVEK), 158 to 196 (WINCMCIVHSMRIQDSLLVVSVAGELKVWDLSSSINSIQ), 315 to 359 (ENKN…VSKF), 399 to 438 (AGTAVVTSSEYIPSLDKLICGCEDGTIIITQALNAAKARL), 456 to 501 (GHHQ…ILHK), 504 to 549 (LEAG…CLLR), and 552 to 591 (KHLFPVKMIKWHPVENFLIVGCADDSVYIWEIETGTLERH). 2 positions are modified to phosphoserine: Ser-1077 and Ser-1079.

It localises to the cytoplasmic vesicle. Functionally, plays a major role in formation of tooth enamel. Specifically required during the maturation phase of amelogenesis for normal formation of the enamel matrix and clearance of enamel proteins. May be involved in localization of the calcium transporter SLC24A4 to the ameloblast cell membrane. The chain is WD repeat-containing protein 72 (WDR72) from Pongo abelii (Sumatran orangutan).